A 349-amino-acid chain; its full sequence is Ion-translocating oxidoreductase complex subunit D (349 aa).

Helical transmembrane passes span 20 to 42, 77 to 99, and 124 to 144; these read VMQR…FGWG, SAML…WMIV, and AMAA…TWIA. Threonine 185 is subject to FMN phosphoryl threonine. 5 helical membrane-spanning segments follow: residues 212-232, 239-259, 265-285, 291-311, and 315-335; these read STGV…LVLL, WHIS…GFLL, ASPL…FIAT, ATSS…VYII, and GGYP…APFI.

The protein belongs to the NqrB/RnfD family. The complex is composed of six subunits: RnfA, RnfB, RnfC, RnfD, RnfE and RnfG. It depends on FMN as a cofactor.

The protein localises to the cell inner membrane. Part of a membrane-bound complex that couples electron transfer with translocation of ions across the membrane. The chain is Ion-translocating oxidoreductase complex subunit D from Shewanella baltica (strain OS223).